Reading from the N-terminus, the 325-residue chain is G/U mismatch-specific uracil DNA glycosylase (325 aa).

A compositionally biased stretch (basic and acidic residues) spans 1–11 (MNDIETRDTGT). Positions 1–50 (MNDIETRDTGTKNDNSSEFNLSVKSHKRKRSFDDENLELEESREETSGGI) are disordered. Polar residues predominate over residues 12-23 (KNDNSSEFNLSV). Residues 34-43 (DENLELEESR) are compositionally biased toward acidic residues.

It belongs to the uracil-DNA glycosylase (UDG) superfamily. TDG/mug family.

The protein resides in the nucleus. The enzyme catalyses Specifically hydrolyzes mismatched double-stranded DNA and polynucleotides, releasing free uracil.. Functionally, removes uracil from G/U mispairs in ssDNA. Also corrects G/G mispairs. Does not catalyze the removal of thymine from G/T mispairs. In Schizosaccharomyces pombe (strain 972 / ATCC 24843) (Fission yeast), this protein is G/U mismatch-specific uracil DNA glycosylase (thp1).